We begin with the raw amino-acid sequence, 158 residues long: MVELLGIIRIRGWAKAPWYINETLEMLRLRYNFNTMMYPKTSQILGMLNKVSPYVTWGEIDPDTLKLLIIKRLETAKGDKVSDSYVKEVLKIENIDTMVKQLYEGKIYLHKLDQYFKLPIRLHPPKGGFKGSVKRPYKNKGEFGYRGDKINELMRRMM.

It belongs to the universal ribosomal protein uL30 family. In terms of assembly, part of the 50S ribosomal subunit.

The sequence is that of Large ribosomal subunit protein uL30 from Saccharolobus islandicus (strain Y.N.15.51 / Yellowstone #2) (Sulfolobus islandicus).